A 39-amino-acid chain; its full sequence is Bacteriocin lactococcin-G subunit alpha (39 aa).

Bacteriocin activity requires interaction of alpha and beta peptides in a molar ratio of 7:1 or 8:1 respectively.

Its function is as follows. Kills Lactococci. The sequence is that of Bacteriocin lactococcin-G subunit alpha from Lactococcus lactis subsp. lactis (Streptococcus lactis).